The primary structure comprises 535 residues: Dimethylaniline monooxygenase [N-oxide-forming] 2 (535 aa).

An N-acetylalanine modification is found at A2. FAD-binding positions include G9–S13, E32, V40–W41, and N61–T62. Residues T60–N61 and S195–D198 contribute to the NADP(+) site. A Glycyl lysine isopeptide (Lys-Gly) (interchain with G-Cter in SUMO) cross-link involves residue K492. The helical transmembrane segment at F510–C530 threads the bilayer.

Belongs to the FMO family. Requires FAD as cofactor. The cofactor is Mg(2+).

The protein localises to the microsome membrane. It is found in the endoplasmic reticulum membrane. Its function is as follows. Catalyzes the oxidative metabolism of numerous xenobiotics, including mainly therapeutic drugs and insecticides that contain a soft nucleophile, most commonly nitrogen and sulfur and participates to their bioactivation. This chain is Dimethylaniline monooxygenase [N-oxide-forming] 2, found in Pan troglodytes (Chimpanzee).